A 190-amino-acid polypeptide reads, in one-letter code: Protein GrpE (190 aa).

The interval 1–40 (MAKEKKEEVKEEEVSEATSTEGSTDVESTNNDDLTTETQA) is disordered. The span at 22–40 (GSTDVESTNNDDLTTETQA) shows a compositional bias: polar residues.

This sequence belongs to the GrpE family. As to quaternary structure, homodimer.

Its subcellular location is the cytoplasm. Its function is as follows. Participates actively in the response to hyperosmotic and heat shock by preventing the aggregation of stress-denatured proteins, in association with DnaK and GrpE. It is the nucleotide exchange factor for DnaK and may function as a thermosensor. Unfolded proteins bind initially to DnaJ; upon interaction with the DnaJ-bound protein, DnaK hydrolyzes its bound ATP, resulting in the formation of a stable complex. GrpE releases ADP from DnaK; ATP binding to DnaK triggers the release of the substrate protein, thus completing the reaction cycle. Several rounds of ATP-dependent interactions between DnaJ, DnaK and GrpE are required for fully efficient folding. The chain is Protein GrpE from Pediococcus pentosaceus (strain ATCC 25745 / CCUG 21536 / LMG 10740 / 183-1w).